A 322-amino-acid polypeptide reads, in one-letter code: Germ cell-specific gene 1-like protein (322 aa).

Residues 1-8 (MKTSRRGR) are Cytoplasmic-facing. The helical transmembrane segment at 9 to 29 (ALLAVALNLLALLFATTAFLT) threads the bilayer. Over 30 to 122 (TYWCQGTQRV…FIDLAPASEK (93 aa)) the chain is Extracellular. A helical transmembrane segment spans residues 123-143 (GVLWLSVVSEVLYILLLVVGF). At 144-163 (SLMCLELLHSSSVIDGLKLN) the chain is on the cytoplasmic side. Residues 164-184 (AFAAVFTVLSGLLGMVAHMMY) form a helical membrane-spanning segment. At 185–207 (TQVFQVTVSLGPEDWRPHSWDYG) the chain is on the extracellular side. The chain crosses the membrane as a helical span at residues 208-228 (WSFCLAWGSFTCCMAASVTTL). The Cytoplasmic segment spans residues 229–322 (NSYTKTVIEF…RQCWVLGHWV (94 aa)). Residue S274 is modified to Phosphoserine.

Belongs to the GSG1 family. In terms of assembly, component of the inner core of AMPAR complexes. AMPAR complexes consist of an inner core made of 4 pore-forming GluA/GRIA proteins (GRIA1, GRIA2, GRIA3 and GRIA4) and 4 major auxiliary subunits arranged in a twofold symmetry. One of the two pairs of distinct binding sites is occupied either by CNIH2, CNIH3 or CACNG2, CACNG3. The other harbors CACNG2, CACNG3, CACNG4, CACNG8 or GSG1L. This inner core of AMPAR complexes is complemented by outer core constituents binding directly to the GluA/GRIA proteins at sites distinct from the interaction sites of the inner core constituents. Outer core constituents include at least PRRT1, PRRT2, CKAMP44/SHISA9, FRRS1L and NRN1. The proteins of the inner and outer core serve as a platform for other, more peripherally associated AMPAR constituents. Alone or in combination, these auxiliary subunits control the gating and pharmacology of the AMPAR complexes and profoundly impact their biogenesis and protein processing. In terms of tissue distribution, expressed in the brain (at protein level).

Its subcellular location is the cell membrane. It is found in the synapse. Its function is as follows. As a component of the inner core of AMPAR complexes, modifies AMPA receptor (AMPAR) gating. The sequence is that of Germ cell-specific gene 1-like protein (Gsg1l) from Rattus norvegicus (Rat).